A 201-amino-acid polypeptide reads, in one-letter code: Anthranilate synthase component 2 (201 aa).

A Glutamine amidotransferase type-1 domain is found at 3–196 (NILFIDNFDS…IDWALSSTPA (194 aa)). Residue 57-59 (GPG) coordinates L-glutamine. Residue Cys84 is the Nucleophile; for GATase activity of the active site. Residues Gln88 and 134–135 (SL) contribute to the L-glutamine site. Catalysis depends on for GATase activity residues His170 and Glu172.

In terms of assembly, heterotetramer consisting of two non-identical subunits: a beta subunit (TrpG) and a large alpha subunit (TrpE).

The enzyme catalyses chorismate + L-glutamine = anthranilate + pyruvate + L-glutamate + H(+). Its pathway is amino-acid biosynthesis; L-tryptophan biosynthesis; L-tryptophan from chorismate: step 1/5. Its function is as follows. Part of a heterotetrameric complex that catalyzes the two-step biosynthesis of anthranilate, an intermediate in the biosynthesis of L-tryptophan. In the first step, the glutamine-binding beta subunit (TrpG) of anthranilate synthase (AS) provides the glutamine amidotransferase activity which generates ammonia as a substrate that, along with chorismate, is used in the second step, catalyzed by the large alpha subunit of AS (TrpE) to produce anthranilate. In the absence of TrpG, TrpE can synthesize anthranilate directly from chorismate and high concentrations of ammonia. This chain is Anthranilate synthase component 2 (trpG), found in Vibrio cholerae serotype O1 (strain ATCC 39315 / El Tor Inaba N16961).